Consider the following 138-residue polypeptide: DNA-directed RNA polymerase subunit omega (138 aa).

The interval Ala-101–Asp-138 is disordered. A compositionally biased stretch (acidic residues) spans Asp-119–Asp-138.

This sequence belongs to the RNA polymerase subunit omega family. As to quaternary structure, the RNAP catalytic core consists of 2 alpha, 1 beta, 1 beta' and 1 omega subunit. When a sigma factor is associated with the core the holoenzyme is formed, which can initiate transcription.

The catalysed reaction is RNA(n) + a ribonucleoside 5'-triphosphate = RNA(n+1) + diphosphate. In terms of biological role, promotes RNA polymerase assembly. Latches the N- and C-terminal regions of the beta' subunit thereby facilitating its interaction with the beta and alpha subunits. The sequence is that of DNA-directed RNA polymerase subunit omega from Rhodospirillum rubrum (strain ATCC 11170 / ATH 1.1.1 / DSM 467 / LMG 4362 / NCIMB 8255 / S1).